The following is a 218-amino-acid chain: Probable carboxylesterase clz11 (218 aa).

Positions 7 to 9 match the Involved in the stabilization of the negatively charged intermediate by the formation of the oxyanion hole motif; sequence LVG. Serine 77 is a catalytic residue.

This sequence belongs to the 'GDXG' lipolytic enzyme family.

It carries out the reaction a carboxylic ester + H2O = an alcohol + a carboxylate + H(+). It functions in the pathway secondary metabolite biosynthesis. In terms of biological role, probable carboxylesterase; part of the gene cluster that mediates the biosynthesis of squalestatin S1 (SQS1, also known as zaragozic acid A), a heavily oxidized fungal polyketide that offers potent cholesterol lowering activity by targeting squalene synthase (SS). SQS1 is composed of a 2,8-dioxobicyclic[3.2.1]octane-3,4,5-tricarboxyclic acid core that is connected to two lipophilic polyketide arms. These initial steps feature the priming of an unusual benzoic acid starter unit onto the highly reducing polyketide synthase clz14, followed by oxaloacetate extension and product release to generate a tricarboxylic acid containing product. The phenylalanine ammonia lyase (PAL) clz10 and the acyl-CoA ligase clz12 are involved in transforming phenylalanine into benzoyl-CoA. The citrate synthase-like protein clz17 is involved in connecting the C-alpha-carbons of the hexaketide chain and oxaloacetate to afford the tricarboxylic acid unit. The potential hydrolytic enzymes, clz11 and clz13, are in close proximity to pks2 and may participate in product release. On the other side, the tetraketide arm is synthesized by a the squalestatin tetraketide synthase clz2 and enzymatically esterified to the core in the last biosynthetic step, by the acetyltransferase clz6. The biosynthesis of the tetraketide must involve 3 rounds of chain extension. After the first and second rounds methyl-transfer occurs, and in all rounds of extension the ketoreductase and dehydratase are active. The enoyl reductase and C-MeT of clz2 are not active in the final round of extension. The acetyltransferase clz6 appears to have a broad substrate selectivity for its acyl CoA substrate, allowing the in vitro synthesis of novel squalestatins. The biosynthesis of SQS1 requires several oxidative steps likely performed by oxidoreductases clz3, clz15 and clz16. Finally, in support of the identification of the cluster as being responsible for SQS1 production, the cluster contains a gene encoding a putative squalene synthase (SS) clz20, suggesting a likely mechanism for self-resistance. The chain is Probable carboxylesterase clz11 from Cochliobolus lunatus (Filamentous fungus).